A 647-amino-acid polypeptide reads, in one-letter code: Protein arginine N-methyltransferase 7 (647 aa).

SAM-dependent MTase PRMT-type domains are found at residues E12 to W332 and G337 to S647. Residues E140 and E149 contribute to the active site.

The protein belongs to the class I-like SAM-binding methyltransferase superfamily. Protein arginine N-methyltransferase family. PRMT7 subfamily.

In terms of biological role, arginine methyltransferase that can both catalyze the formation of omega-N monomethylarginine (MMA) and symmetrical dimethylarginine (sDMA). In Caenorhabditis elegans, this protein is Protein arginine N-methyltransferase 7 (prmt-7).